Consider the following 449-residue polypeptide: L10-interacting MYB domain-containing protein (449 aa).

One can recognise a Myb-like domain in the interval 162–225 (SNPQTKGYWS…YTRPQLKNHW (64 aa)). Positions 297 to 324 (TYTPPSRSRKKLLHNRSESPQWRDTTPL) are disordered. Over residues 314-324 (ESPQWRDTTPL) the composition is skewed to polar residues.

Interacts with RPL10A. As to expression, expressed in seedlings, leaves, roots, stems and flowers.

Its subcellular location is the nucleus. Functionally, transcriptional repressor that associates with ribosomal protein promoters. The protein is L10-interacting MYB domain-containing protein of Arabidopsis thaliana (Mouse-ear cress).